A 639-amino-acid polypeptide reads, in one-letter code: Protein phosphatase EYA4 (639 aa).

Methionine 1 is modified (N-acetylmethionine). Disordered stretches follow at residues 1 to 72 (MEDS…GGEN), 210 to 232 (QTQS…PQPG), and 300 to 368 (ADGT…DSDL). Lysine 14 is covalently cross-linked (Glycyl lysine isopeptide (Lys-Gly) (interchain with G-Cter in SUMO2)). Over residues 18–30 (ESDVSQSQNSRSM) the composition is skewed to polar residues. A Glycyl lysine isopeptide (Lys-Gly) (interchain with G-Cter in SUMO2) cross-link involves residue lysine 52. The segment covering 56-66 (SNLSSTSVTTN) has biased composition (low complexity). Polar residues predominate over residues 300-334 (ADGTPSSTSTYQLQESLPGLTNQPGEFDTMQSPST). Serine 361 carries the phosphoserine modification. Aspartate 375 (nucleophile) is an active-site residue. Mg(2+)-binding residues include aspartate 375, aspartate 377, and aspartate 603. Aspartate 377 (proton donor) is an active-site residue.

The protein belongs to the HAD-like hydrolase superfamily. EYA family. In terms of assembly, interacts with SIX3; translocates EYA4 from the cytoplasm to the nucleus and promotes activation of their target genes. It depends on Mg(2+) as a cofactor. As to expression, highly expressed in heart and skeletal muscle.

It localises to the cytoplasm. The protein resides in the nucleus. The enzyme catalyses O-phospho-L-tyrosyl-[protein] + H2O = L-tyrosyl-[protein] + phosphate. Tyrosine phosphatase that specifically dephosphorylates 'Tyr-142' of histone H2AX (H2AXY142ph). 'Tyr-142' phosphorylation of histone H2AX plays a central role in DNA repair and acts as a mark that distinguishes between apoptotic and repair responses to genotoxic stress. Promotes efficient DNA repair by dephosphorylating H2AX, promoting the recruitment of DNA repair complexes containing MDC1. Its function as histone phosphatase probably explains its role in transcription regulation during organogenesis. May be involved in development of the eye. The protein is Protein phosphatase EYA4 (EYA4) of Homo sapiens (Human).